A 66-amino-acid chain; its full sequence is Prophage transcriptional regulatory protein (66 aa).

The chain is Prophage transcriptional regulatory protein (croE) from Escherichia coli (strain K12).